Reading from the N-terminus, the 224-residue chain is Phosphoglycolate phosphatase (224 aa).

Residue D8 is the Nucleophile of the active site. Residues D8, D10, G11, and G43 each contribute to the Mg(2+) site. K151 serves as a coordination point for substrate. D174, S175, and D178 together coordinate Mg(2+).

The protein belongs to the HAD-like hydrolase superfamily. Archaeal SPP-like hydrolase family. In terms of assembly, homodimer. Requires Mg(2+) as cofactor.

It carries out the reaction 2-phosphoglycolate + H2O = glycolate + phosphate. Its activity is regulated as follows. Inhibited by Ca(2+) ions and by high chloride ion concentration. By contrast, low chloride concentration (up to 50 mM) slightly activate the enzyme. Its function is as follows. Catalyzes the dephosphorylation of 2-phosphoglycolate. Also has significant, but less efficient, pyrophosphatase activity, since it is able to catalyze the release of phosphate from inorganic pyrophosphate (PPi). The protein is Phosphoglycolate phosphatase of Thermoplasma acidophilum (strain ATCC 25905 / DSM 1728 / JCM 9062 / NBRC 15155 / AMRC-C165).